Here is a 391-residue protein sequence, read N- to C-terminus: Elongation factor Tu 1 (391 aa).

The tr-type G domain occupies 10-201 (KPHVNIGTIG…AVDSYIPTPE (192 aa)). Residues 19-26 (GHVDHGKT) form a G1 region. Residue 19–26 (GHVDHGKT) participates in GTP binding. Residue T26 participates in Mg(2+) binding. Residues 55–59 (GITIS) are G2. Residues 76–79 (DCPG) are G3. GTP contacts are provided by residues 76-80 (DCPGH) and 131-134 (NKVD). A G4 region spans residues 131–134 (NKVD). The G5 stretch occupies residues 169 to 171 (SAL).

The protein belongs to the TRAFAC class translation factor GTPase superfamily. Classic translation factor GTPase family. EF-Tu/EF-1A subfamily. In terms of assembly, monomer.

It is found in the cytoplasm. It catalyses the reaction GTP + H2O = GDP + phosphate + H(+). In terms of biological role, GTP hydrolase that promotes the GTP-dependent binding of aminoacyl-tRNA to the A-site of ribosomes during protein biosynthesis. This Rhizobium etli (strain ATCC 51251 / DSM 11541 / JCM 21823 / NBRC 15573 / CFN 42) protein is Elongation factor Tu 1.